A 1451-amino-acid polypeptide reads, in one-letter code: Dual 3',5'-cyclic-AMP and -GMP phosphodiesterase 11 (1451 aa).

5 disordered regions span residues 1–54 (MGQA…PQIQ), 75–100 (ATTP…GGYG), 125–169 (LPAH…QVQQ), 235–262 (GNDV…GATT), and 327–374 (QHHH…GSGG). The segment covering 11-21 (RGCRYKNKNKS) has biased composition (basic residues). A compositionally biased stretch (low complexity) spans 24 to 45 (QQQQQQQQQQQQQQQHQQQQQQ). The segment covering 77–91 (TPLQFQPTGRMNTEQ) has biased composition (polar residues). Composition is skewed to low complexity over residues 135–147 (SGAA…NGSS) and 160–169 (QQQQQYQVQQ). Residues 235 to 248 (GNDVVSSTSPTHAN) show a composition bias toward polar residues. Residues 327–340 (QHHHNHAHLHHSQH) are compositionally biased toward basic residues. A compositionally biased stretch (low complexity) spans 341-355 (SHYQAGGAVGSSSLG). Positions 356 to 374 (STGGASGAGGAPSLGGSGG) are enriched in gly residues. GAF domains lie at 419–572 (EVRT…GIGL) and 604–754 (TIEH…GMGI). The PDEase domain maps to 783 to 1107 (ATMDEAHRLR…GHWIDLADVV (325 aa)). His860 functions as the Proton donor in the catalytic mechanism. Residues His864, His900, Asp901, and Asp1011 each contribute to the a divalent metal cation site. 4 disordered regions span residues 1109–1171 (TKTS…SNTN), 1200–1248 (DEQA…TPVS), 1268–1305 (QTSN…QELD), and 1325–1364 (INNH…IGSA). Composition is skewed to low complexity over residues 1142–1171 (ASEA…SNTN) and 1218–1234 (CRSN…SCLS). Positions 1268–1277 (QTSNQAQTQK) are enriched in polar residues. Over residues 1328-1355 (HSHHHNHSHSHNHNHHHHHHHHSHHNHS) the composition is skewed to basic residues.

Belongs to the cyclic nucleotide phosphodiesterase family. The cofactor is a divalent metal cation. As to expression, in adults, it is enriched in Malpighian tubules.

It carries out the reaction 3',5'-cyclic GMP + H2O = GMP + H(+). The catalysed reaction is 3',5'-cyclic AMP + H2O = AMP + H(+). Plays a role in signal transduction by regulating the intracellular concentration of cyclic nucleotides cAMP and cGMP. Dual-specificity phosphodiesterase that catalyzes the hydrolysis of both cAMP and cGMP to 5'-AMP and 5'-GMP, respectively. This Drosophila melanogaster (Fruit fly) protein is Dual 3',5'-cyclic-AMP and -GMP phosphodiesterase 11 (Pde11).